A 157-amino-acid chain; its full sequence is MEDQIRQLKDIFDRFDMDADGSLTILELAALLRSLGLKPSGDQIHVLLASMDSNGNGFVEFDELVGTILPDLNEEVLINSEQLLEIFKSFDRDGNGFISAAELAGAMAKMGQPLTYKELTEMIKEADTNGDGVISFGEFASIMAKSAVDYFGLKINS.

4 consecutive EF-hand domains span residues aspartate 3–lysine 38, proline 39–glutamate 74, isoleucine 78–proline 113, and leucine 114–aspartate 149. Residues aspartate 16, aspartate 18, aspartate 20, serine 22, glutamate 27, aspartate 52, asparagine 54, asparagine 56, glutamate 63, aspartate 91, aspartate 93, asparagine 95, glutamate 102, aspartate 127, asparagine 129, aspartate 131, and glutamate 138 each coordinate Ca(2+).

Functionally, potential calcium sensor. The protein is Probable calcium-binding protein CML15 (CML15) of Arabidopsis thaliana (Mouse-ear cress).